The primary structure comprises 500 residues: Glycerol kinase (500 aa).

Threonine 11 contacts ADP. The ATP site is built by threonine 11, threonine 12, and serine 13. A sn-glycerol 3-phosphate-binding site is contributed by threonine 11. Arginine 15 is a binding site for ADP. Arginine 81, glutamate 82, tyrosine 133, and aspartate 242 together coordinate sn-glycerol 3-phosphate. Glycerol is bound by residues arginine 81, glutamate 82, tyrosine 133, aspartate 242, and glutamine 243. 2 residues coordinate ADP: threonine 264 and glycine 307. ATP is bound by residues threonine 264, glycine 307, glutamine 311, and glycine 411. Glycine 411 lines the ADP pocket.

This sequence belongs to the FGGY kinase family.

It catalyses the reaction glycerol + ATP = sn-glycerol 3-phosphate + ADP + H(+). The protein operates within polyol metabolism; glycerol degradation via glycerol kinase pathway; sn-glycerol 3-phosphate from glycerol: step 1/1. Its activity is regulated as follows. Inhibited by fructose 1,6-bisphosphate (FBP). Key enzyme in the regulation of glycerol uptake and metabolism. Catalyzes the phosphorylation of glycerol to yield sn-glycerol 3-phosphate. The protein is Glycerol kinase of Bradyrhizobium sp. (strain BTAi1 / ATCC BAA-1182).